The primary structure comprises 390 residues: Phosphopentomutase (390 aa).

Positions 11, 283, 288, 324, 325, and 336 each coordinate Mn(2+).

It belongs to the phosphopentomutase family. Mn(2+) is required as a cofactor.

The protein resides in the cytoplasm. The enzyme catalyses 2-deoxy-alpha-D-ribose 1-phosphate = 2-deoxy-D-ribose 5-phosphate. It carries out the reaction alpha-D-ribose 1-phosphate = D-ribose 5-phosphate. It participates in carbohydrate degradation; 2-deoxy-D-ribose 1-phosphate degradation; D-glyceraldehyde 3-phosphate and acetaldehyde from 2-deoxy-alpha-D-ribose 1-phosphate: step 1/2. Isomerase that catalyzes the conversion of deoxy-ribose 1-phosphate (dRib-1-P) and ribose 1-phosphate (Rib-1-P) to deoxy-ribose 5-phosphate (dRib-5-P) and ribose 5-phosphate (Rib-5-P), respectively. This Alkaliphilus metalliredigens (strain QYMF) protein is Phosphopentomutase.